A 487-amino-acid polypeptide reads, in one-letter code: 3-octaprenyl-4-hydroxybenzoate carboxy-lyase (487 aa).

Asn172 serves as a coordination point for Mn(2+). Residues 175 to 177 (IYR), 189 to 191 (RWL), and 194 to 195 (RG) each bind prenylated FMN. Glu238 is a Mn(2+) binding site. The Proton donor role is filled by Asp287.

The protein belongs to the UbiD family. Homohexamer. Prenylated FMN serves as cofactor. Requires Mn(2+) as cofactor.

It is found in the cell membrane. It catalyses the reaction a 4-hydroxy-3-(all-trans-polyprenyl)benzoate + H(+) = a 2-(all-trans-polyprenyl)phenol + CO2. Its pathway is cofactor biosynthesis; ubiquinone biosynthesis. Its function is as follows. Catalyzes the decarboxylation of 3-octaprenyl-4-hydroxy benzoate to 2-octaprenylphenol, an intermediate step in ubiquinone biosynthesis. In Nitrosospira multiformis (strain ATCC 25196 / NCIMB 11849 / C 71), this protein is 3-octaprenyl-4-hydroxybenzoate carboxy-lyase.